We begin with the raw amino-acid sequence, 519 residues long: Ribonuclease Y (519 aa).

A helical membrane pass occupies residues 3-23 (PMTVLISILLTLLGLVVGYYV). Residues 209–272 (TVSVVNLPND…ETARIALDKL (64 aa)) form the KH domain. The HD domain maps to 335–428 (VLKHSMEVAF…VAAADALSAA (94 aa)).

The protein belongs to the RNase Y family.

Its subcellular location is the cell membrane. Functionally, endoribonuclease that initiates mRNA decay. The polypeptide is Ribonuclease Y (Bacillus velezensis (strain DSM 23117 / BGSC 10A6 / LMG 26770 / FZB42) (Bacillus amyloliquefaciens subsp. plantarum)).